A 163-amino-acid polypeptide reads, in one-letter code: Adenosine 5'-monophosphoramidase HINT2 (163 aa).

Residues 1–17 constitute a mitochondrion transit peptide; the sequence is MAAAVVLAAGLRAARRA. One can recognise an HIT domain in the interval 55–163; it reads IFSRILDKSL…GGRQLQWPPG (109 aa). The AMP site is built by Ser63 and Asp80. N6-acetyllysine is present on Lys119. Asn136 contributes to the AMP binding site. An N6-acetyllysine modification is found at Lys139. Residues 142–145 and 149–151 contribute to the AMP site; these read AQSV and HIH. Residues 147–151 carry the Histidine triad motif motif; it reads HLHIH. His149 functions as the Tele-AMP-histidine intermediate in the catalytic mechanism.

It belongs to the HINT family. In terms of tissue distribution, high expression in liver and pancreas. Expression is significantly down-regulated in hepatocellular carcinoma (HCC) patients.

The protein resides in the mitochondrion. It carries out the reaction adenosine 5'-phosphoramidate + H2O = AMP + NH4(+). Its function is as follows. Exhibits adenosine 5'-monophosphoramidase activity, hydrolyzing purine nucleotide phosphoramidates with a single phosphate group such as adenosine 5'monophosphoramidate (AMP-NH2) to yield AMP and NH2. Hydrolyzes adenosine 5'-O-p-nitrophenylphosphoramidate (AMP-pNA). Hydrolyzes fluorogenic purine nucleoside tryptamine phosphoramidates in vitro. May be involved in steroid biosynthesis. May play a role in apoptosis. The protein is Adenosine 5'-monophosphoramidase HINT2 of Homo sapiens (Human).